We begin with the raw amino-acid sequence, 110 residues long: UPF0122 protein BCAH187_A3894 (110 aa).

Belongs to the UPF0122 family.

Functionally, might take part in the signal recognition particle (SRP) pathway. This is inferred from the conservation of its genetic proximity to ftsY/ffh. May be a regulatory protein. The polypeptide is UPF0122 protein BCAH187_A3894 (Bacillus cereus (strain AH187)).